Here is a 566-residue protein sequence, read N- to C-terminus: OTU domain-containing protein 5 (566 aa).

Disordered regions lie at residues 1–117 and 146–175; these read MTIL…GDAL and PGHSKRRRQAPGVGAVGGASPEREEVGAGY. The span at 11 to 30 shows a compositional bias: pro residues; it reads PPDADPANEPPPPGPLPPAP. Gly residues predominate over residues 32 to 47; it reads RGGGVGVGGGGTGVGG. Residues 63 to 75 show a composition bias toward pro residues; that stretch reads ASPPPQGPLPGPP. Residue Ser-64 is modified to Phosphoserine. Positions 84 to 97 are enriched in low complexity; it reads AVPPGAVAGPRPQQ. Over residues 105–115 the composition is skewed to gly residues; sequence GPGGPGGGPGD. Ser-165 carries the post-translational modification Phosphoserine. The residue at position 175 (Tyr-175) is a Phosphotyrosine. Residue Ser-177 is modified to Phosphoserine. A Phosphothreonine modification is found at Thr-195. Residues 213 to 336 enclose the OTU domain; the sequence is FIIKQMKEDG…NIHYNSVVNP (124 aa). Residues 218-224 are cys-loop; it reads MKEDGAC. The active site involves Asp-221. Catalysis depends on Cys-224, which acts as the Nucleophile. Residues 273–283 are variable-loop; it reads KRKNNCHGNHI. Ser-323 is modified (phosphoserine). Residues 324–329 are his-loop; sequence YHRNIH. The active site involves His-329. Phosphoserine occurs at positions 332 and 370. Positions 413-497 are disordered; that stretch reads ARQVRGPSQP…PGTSSQFSAG (85 aa). Low complexity-rich tracts occupy residues 425 to 438 and 445 to 457; these read ASATCSSATAAASS and SRSPRQRSSASSP. Ser-447 carries the post-translational modification Phosphoserine. Thr-502 carries the phosphothreonine modification. Ser-503 bears the Phosphoserine mark.

It belongs to the peptidase C85 family. Interacts with TRAF3. Phosphorylation at Ser-177 is required for deubiquitinating activity. Phosphorylation at Ser-323, Ser-332 and Ser-503 by MTOR promotes its activity.

The protein localises to the nucleus. The enzyme catalyses Thiol-dependent hydrolysis of ester, thioester, amide, peptide and isopeptide bonds formed by the C-terminal Gly of ubiquitin (a 76-residue protein attached to proteins as an intracellular targeting signal).. Its activity is regulated as follows. Inhibited by N-ethyl-maleimide (NEM). Functionally, deubiquitinating enzyme that functions as a negative regulator of the innate immune system. Has peptidase activity towards 'Lys-48'- and 'Lys-63'-linked polyubiquitin chains. Can also cleave 'Lys-11'-linked ubiquitin chains (in vitro). Acts via TRAF3 deubiquitination and subsequent suppression of type I interferon (IFN) production. Controls neuroectodermal differentiation through cleaving 'Lys-48'-linked ubiquitin chains to counteract degradation of select chromatin regulators such as ARID1A, HDAC2 and HCF1. Acts as a positive regulator of mTORC1 and mTORC2 signaling following phosphorylation by MTOR: acts by mediating deubiquitination of BTRC, leading to its stability. This Rattus norvegicus (Rat) protein is OTU domain-containing protein 5.